The following is a 344-amino-acid chain: Holliday junction branch migration complex subunit RuvB (344 aa).

The tract at residues 1-185 is large ATPase domain (RuvB-L); it reads MTERSDRDVS…FGFTAHMDFY (185 aa). ATP contacts are provided by residues leucine 24, arginine 25, glycine 66, lysine 69, threonine 70, serine 71, 132 to 134, arginine 175, tyrosine 185, and arginine 222; that span reads EDF. Threonine 70 contributes to the Mg(2+) binding site. Residues 186-256 form a small ATPAse domain (RuvB-S) region; it reads EPAELERVLA…VAKAALEVYD (71 aa). The tract at residues 259–344 is head domain (RuvB-H); that stretch reads ELGLDRLDRA…VGASQPGLFE (86 aa). Residues arginine 314 and arginine 319 each contribute to the DNA site.

Belongs to the RuvB family. As to quaternary structure, homohexamer. Forms an RuvA(8)-RuvB(12)-Holliday junction (HJ) complex. HJ DNA is sandwiched between 2 RuvA tetramers; dsDNA enters through RuvA and exits via RuvB. An RuvB hexamer assembles on each DNA strand where it exits the tetramer. Each RuvB hexamer is contacted by two RuvA subunits (via domain III) on 2 adjacent RuvB subunits; this complex drives branch migration. In the full resolvosome a probable DNA-RuvA(4)-RuvB(12)-RuvC(2) complex forms which resolves the HJ.

It localises to the cytoplasm. The catalysed reaction is ATP + H2O = ADP + phosphate + H(+). Its function is as follows. The RuvA-RuvB-RuvC complex processes Holliday junction (HJ) DNA during genetic recombination and DNA repair, while the RuvA-RuvB complex plays an important role in the rescue of blocked DNA replication forks via replication fork reversal (RFR). RuvA specifically binds to HJ cruciform DNA, conferring on it an open structure. The RuvB hexamer acts as an ATP-dependent pump, pulling dsDNA into and through the RuvAB complex. RuvB forms 2 homohexamers on either side of HJ DNA bound by 1 or 2 RuvA tetramers; 4 subunits per hexamer contact DNA at a time. Coordinated motions by a converter formed by DNA-disengaged RuvB subunits stimulates ATP hydrolysis and nucleotide exchange. Immobilization of the converter enables RuvB to convert the ATP-contained energy into a lever motion, pulling 2 nucleotides of DNA out of the RuvA tetramer per ATP hydrolyzed, thus driving DNA branch migration. The RuvB motors rotate together with the DNA substrate, which together with the progressing nucleotide cycle form the mechanistic basis for DNA recombination by continuous HJ branch migration. Branch migration allows RuvC to scan DNA until it finds its consensus sequence, where it cleaves and resolves cruciform DNA. The chain is Holliday junction branch migration complex subunit RuvB from Mycobacterium tuberculosis (strain ATCC 25177 / H37Ra).